The sequence spans 53 residues: Large ribosomal subunit protein bL33A (53 aa).

This sequence belongs to the bacterial ribosomal protein bL33 family.

The sequence is that of Large ribosomal subunit protein bL33A (rpmG1) from Mycoplasma pneumoniae (strain ATCC 29342 / M129 / Subtype 1) (Mycoplasmoides pneumoniae).